The following is a 42-amino-acid chain: Statherin (42 aa).

Positions 1 to 6 are hydroxyapatite-binding; inhibits crystal growth; that stretch reads DSSEEK. Ser-2 and Ser-3 each carry phosphoserine. Residues 18 to 42 form a disordered region; the sequence is RYGPYQPFVPPPLYPQPYQPYQPQY. Positions 18–42 are hydrophobic; inhibits precipitation of calcium phosphate salts; the sequence is RYGPYQPFVPPPLYPQPYQPYQPQY. The span at 24-42 shows a compositional bias: pro residues; that stretch reads PFVPPPLYPQPYQPYQPQY.

It belongs to the histatin/statherin family. Secreted by parotid and submandibular glands.

The protein localises to the secreted. Salivary protein that stabilizes saliva supersaturated with calcium salts by inhibiting the precipitation of calcium phosphate salts. It also modulates hydroxyapatite crystal formation on the tooth surface. This is Statherin (STATH) from Macaca arctoides (Stump-tailed macaque).